The following is an 845-amino-acid chain: ATPase morc-1 (845 aa).

ATP contacts are provided by residues asparagine 43, 88–90, and 97–103; these read SAK and RYGNGLK. A Mg(2+)-binding site is contributed by asparagine 43. Residues 284-311 adopt a coiled-coil conformation; it reads AAYNKILDEKNETVKKCEEEKALVMSEI. Lysine 422 provides a ligand contact to ATP. Disordered regions lie at residues 566 to 590 and 628 to 739; these read LPQK…SASS and KMEP…GKAV. The segment covering 574–590 has biased composition (low complexity); sequence SAPSSSDSQNSIRSASS. Residues 637–646 show a composition bias toward basic and acidic residues; that stretch reads HDSHIAEVQR.

As to quaternary structure, predominantly forms monomers and dimers, but multimerizes to form trimers and tetramers upon DNA binding. As to expression, expressed in germline and somatic cells.

Its subcellular location is the nucleus. It localises to the nuclear body. It carries out the reaction ATP + H2O = ADP + phosphate + H(+). In terms of biological role, binds non-specifically to DNA and forms static foci which grow by recruiting other morc-1 molecules, and thereby stimulates conformational changes and compaction of DNA, which appears to be enhanced by ATP-binding, but does not require ATP activity. Preferentially binds to long DNAs. Compacts and entraps segments of DNA by sequentially forming loops along the DNA, beginning at the free ends of single- and double-tethered DNA. Does not extrude the DNA loops on compacted double-tethered DNA. Involved in gene silencing. Plays a role in germline RNA interference (RNAi), and in particular, the silencing of endogenous small interfering RNA (endo-siRNA) target genes. May play a role in heterochromatin localization and condensation, and the siRNAi-directed trimethylation of 'Lys-9' of histone H3 in hermaphrodite X chromosomes. Promotes transgenerational epigenetic inheritance and germline immortality. The protein is ATPase morc-1 of Caenorhabditis elegans.